We begin with the raw amino-acid sequence, 261 residues long: Enolase-phosphatase E1 (261 aa).

Asp16 and Glu18 together coordinate Mg(2+). Substrate contacts are provided by residues 153–154 and Lys187; that span reads SS. Asp212 contacts Mg(2+).

It belongs to the HAD-like hydrolase superfamily. MasA/MtnC family. As to quaternary structure, monomer. The cofactor is Mg(2+).

The protein localises to the cytoplasm. It localises to the nucleus. The enzyme catalyses 5-methylsulfanyl-2,3-dioxopentyl phosphate + H2O = 1,2-dihydroxy-5-(methylsulfanyl)pent-1-en-3-one + phosphate. The protein operates within amino-acid biosynthesis; L-methionine biosynthesis via salvage pathway; L-methionine from S-methyl-5-thio-alpha-D-ribose 1-phosphate: step 3/6. Its pathway is amino-acid biosynthesis; L-methionine biosynthesis via salvage pathway; L-methionine from S-methyl-5-thio-alpha-D-ribose 1-phosphate: step 4/6. In terms of biological role, bifunctional enzyme that catalyzes the enolization of 2,3-diketo-5-methylthiopentyl-1-phosphate (DK-MTP-1-P) into the intermediate 2-hydroxy-3-keto-5-methylthiopentenyl-1-phosphate (HK-MTPenyl-1-P), which is then dephosphorylated to form the acireductone 1,2-dihydroxy-3-keto-5-methylthiopentene (DHK-MTPene). The polypeptide is Enolase-phosphatase E1 (Bos taurus (Bovine)).